We begin with the raw amino-acid sequence, 172 residues long: Shikimate kinase (172 aa).

ATP is bound at residue 11–16 (GAGKST). A Mg(2+)-binding site is contributed by Ser-15. Residues Asp-33, Arg-57, and Gly-79 each contribute to the substrate site. Position 117 (Arg-117) interacts with ATP. Arg-136 contributes to the substrate binding site. Position 153 (Arg-153) interacts with ATP.

The protein belongs to the shikimate kinase family. In terms of assembly, monomer. Mg(2+) is required as a cofactor.

It localises to the cytoplasm. The enzyme catalyses shikimate + ATP = 3-phosphoshikimate + ADP + H(+). It participates in metabolic intermediate biosynthesis; chorismate biosynthesis; chorismate from D-erythrose 4-phosphate and phosphoenolpyruvate: step 5/7. In terms of biological role, catalyzes the specific phosphorylation of the 3-hydroxyl group of shikimic acid using ATP as a cosubstrate. The chain is Shikimate kinase from Pseudomonas savastanoi pv. phaseolicola (strain 1448A / Race 6) (Pseudomonas syringae pv. phaseolicola (strain 1448A / Race 6)).